The primary structure comprises 368 residues: MIKIKKRKILLLPGDGIGPEVIQEVKKVILWLNSNKSLDFEIDEDLAGGCSYDKHGTPITDEVFYKALESEFVMLGAVGGPKWDNLEFSKKPERALLKLRKELKLFANLRPAICFEQLVDASTLKPEIVSGLDIMIVRELTGGIYFGEPRGIKPIENGERKGINTHSYTTSEIVRVAKVAFDLARKRSNRVTSCEKSNVMEAGQLWKEEVQELHDKEYKDVELSHMLADNCAMQLLKNPKQFDVIVTDNLFGDMLSDQASMLTGSLGLLPSASLGAKNKDGEMRAMYEPIHGSAPDIAGKEIANPIASILSFAMALRYSLDLDSEADALEKAVQDVLNDGLRTKDILSQGKKEVSTSAMGDAIISKLQ.

80 to 93 (GPKWDNLEFSKKPE) contributes to the NAD(+) binding site. Positions 100, 110, 138, and 229 each coordinate substrate. Mg(2+) contacts are provided by aspartate 229, aspartate 253, and aspartate 257. 292–304 (GSAPDIAGKEIAN) provides a ligand contact to NAD(+).

This sequence belongs to the isocitrate and isopropylmalate dehydrogenases family. LeuB type 1 subfamily. In terms of assembly, homodimer. Mg(2+) is required as a cofactor. Requires Mn(2+) as cofactor.

It is found in the cytoplasm. It carries out the reaction (2R,3S)-3-isopropylmalate + NAD(+) = 4-methyl-2-oxopentanoate + CO2 + NADH. It participates in amino-acid biosynthesis; L-leucine biosynthesis; L-leucine from 3-methyl-2-oxobutanoate: step 3/4. Its function is as follows. Catalyzes the oxidation of 3-carboxy-2-hydroxy-4-methylpentanoate (3-isopropylmalate) to 3-carboxy-4-methyl-2-oxopentanoate. The product decarboxylates to 4-methyl-2 oxopentanoate. The sequence is that of 3-isopropylmalate dehydrogenase from Pelagibacter ubique (strain HTCC1062).